Reading from the N-terminus, the 198-residue chain is Holliday junction resolvase RecU (198 aa).

The interval 1–22 (MVNYPHKLSSQKRQTSLSQPKN) is disordered. A compositionally biased stretch (polar residues) spans 11–22 (QKRQTSLSQPKN). Positions 81, 83, 96, and 115 each coordinate Mg(2+).

The protein belongs to the RecU family. The cofactor is Mg(2+).

The protein localises to the cytoplasm. It carries out the reaction Endonucleolytic cleavage at a junction such as a reciprocal single-stranded crossover between two homologous DNA duplexes (Holliday junction).. Endonuclease that resolves Holliday junction intermediates in genetic recombination. Cleaves mobile four-strand junctions by introducing symmetrical nicks in paired strands. Promotes annealing of linear ssDNA with homologous dsDNA. Required for DNA repair, homologous recombination and chromosome segregation. The sequence is that of Holliday junction resolvase RecU from Streptococcus pneumoniae (strain Hungary19A-6).